We begin with the raw amino-acid sequence, 1448 residues long: Murinoglobulin-2 (1448 aa).

The signal sequence occupies residues methionine 1–leucine 24. 3 cysteine pairs are disulfide-bonded: cysteine 48/cysteine 86, cysteine 245/cysteine 277, and cysteine 263/cysteine 289. N-linked (GlcNAc...) asparagine glycosylation occurs at asparagine 55. N-linked (GlcNAc...) asparagine glycosylation is found at asparagine 295, asparagine 315, asparagine 387, and asparagine 502. 3 disulfides stabilise this stretch: cysteine 462–cysteine 556, cysteine 588–cysteine 748, and cysteine 636–cysteine 681. Positions proline 678–arginine 709 are bait region. 2 N-linked (GlcNAc...) asparagine glycosylation sites follow: asparagine 751 and asparagine 846. Disulfide bonds link cysteine 824–cysteine 860, cysteine 898–cysteine 1295, cysteine 1056–cysteine 1101, and cysteine 1326–cysteine 1441. Residues cysteine 949–glutamine 952 constitute a cross-link (isoglutamyl cysteine thioester (Cys-Gln)). Asparagine 968 carries N-linked (GlcNAc...) asparagine glycosylation. 3 N-linked (GlcNAc...) asparagine glycosylation sites follow: asparagine 1114, asparagine 1285, and asparagine 1398.

Belongs to the protease inhibitor I39 (alpha-2-macroglobulin) family. Monomer.

Its subcellular location is the secreted. Functionally, a proteinase activates the inhibitor by specific proteolysis in the bait region, which, by an unknown mechanism leads to reaction at the cysteinyl-glutamyl internal thiol ester site and to a conformational change, whereby the proteinase is trapped and/or covalently bound to the inhibitor. While in the tetrameric proteinase inhibitors steric inhibition is sufficiently strong, monomeric forms need a covalent linkage between the activated glutamyl residue of the original thiol ester and a terminal amino group of a lysine or another nucleophilic group on the proteinase, for inhibition to be effective. The polypeptide is Murinoglobulin-2 (Rattus norvegicus (Rat)).